Here is a 224-residue protein sequence, read N- to C-terminus: 7-cyano-7-deazaguanine synthase (224 aa).

Residue 10–20 (LSGGLDSATVA) participates in ATP binding. Cysteine 189, cysteine 199, cysteine 202, and cysteine 205 together coordinate Zn(2+).

It belongs to the QueC family. Zn(2+) serves as cofactor.

It carries out the reaction 7-carboxy-7-deazaguanine + NH4(+) + ATP = 7-cyano-7-deazaguanine + ADP + phosphate + H2O + H(+). Its pathway is purine metabolism; 7-cyano-7-deazaguanine biosynthesis. Its function is as follows. Catalyzes the ATP-dependent conversion of 7-carboxy-7-deazaguanine (CDG) to 7-cyano-7-deazaguanine (preQ(0)). This is 7-cyano-7-deazaguanine synthase from Azotobacter vinelandii (strain DJ / ATCC BAA-1303).